Consider the following 263-residue polypeptide: uncharacterized protein (263 aa).

The WD repeat unit spans residues 53–89 (SAVTASKFSPDGRWLVNLTDQGYVQLWDVHKGERVKT).

This is an uncharacterized protein from Deinococcus radiodurans (strain ATCC 13939 / DSM 20539 / JCM 16871 / CCUG 27074 / LMG 4051 / NBRC 15346 / NCIMB 9279 / VKM B-1422 / R1).